Reading from the N-terminus, the 288-residue chain is Alpha/beta hydrolase domain-containing protein 17B (288 aa).

Residues Ser170, Asp235, and His264 each act as charge relay system in the active site. Position 282 is a phosphoserine (Ser282).

Belongs to the AB hydrolase superfamily. ABHD17 family. Palmitoylated on cysteine residues located in a cysteine cluster at the N-terminus which promotes membrane localization. Palmitoylation is required for post-synaptic localization and for depalmitoylating activity towards DLG4/PSD95.

The protein resides in the cell membrane. It is found in the recycling endosome membrane. It localises to the cell projection. Its subcellular location is the dendritic spine. The protein localises to the postsynaptic density membrane. It catalyses the reaction S-hexadecanoyl-L-cysteinyl-[protein] + H2O = L-cysteinyl-[protein] + hexadecanoate + H(+). With respect to regulation, inhibited by palmostatin-B. Hydrolyzes fatty acids from S-acylated cysteine residues in proteins. Has depalmitoylating activity towards DLG4/PSD95. Has depalmitoylating activity towards GAP43. Has depalmitoylating activity towards MAP6. Has depalmitoylating activity towards NRAS. This is Alpha/beta hydrolase domain-containing protein 17B from Homo sapiens (Human).